A 301-amino-acid polypeptide reads, in one-letter code: Acetylglutamate kinase (301 aa).

Residues 68–69 (GG), Arg90, and Asn195 contribute to the substrate site.

It belongs to the acetylglutamate kinase family. ArgB subfamily.

The protein localises to the cytoplasm. It catalyses the reaction N-acetyl-L-glutamate + ATP = N-acetyl-L-glutamyl 5-phosphate + ADP. It functions in the pathway amino-acid biosynthesis; L-arginine biosynthesis; N(2)-acetyl-L-ornithine from L-glutamate: step 2/4. Functionally, catalyzes the ATP-dependent phosphorylation of N-acetyl-L-glutamate. In Pseudomonas savastanoi pv. phaseolicola (strain 1448A / Race 6) (Pseudomonas syringae pv. phaseolicola (strain 1448A / Race 6)), this protein is Acetylglutamate kinase.